The following is a 479-amino-acid chain: Ribulose bisphosphate carboxylase large chain (479 aa).

Positions 1 to 2 (MS) are excised as a propeptide. Residues Asn123 and Thr173 each contribute to the substrate site. Lys175 (proton acceptor) is an active-site residue. Lys177 contributes to the substrate binding site. Positions 201, 203, and 204 each coordinate Mg(2+). Lys201 is subject to N6-carboxylysine. Ser208 carries the post-translational modification Phosphoserine. His294 (proton acceptor) is an active-site residue. Residues Arg295 and His327 each contribute to the substrate site. Thr330 carries the phosphothreonine modification. Ser379 is a binding site for substrate.

It belongs to the RuBisCO large chain family. Type I subfamily. In terms of assembly, heterohexadecamer of 8 large chains and 8 small chains; disulfide-linked. The disulfide link is formed within the large subunit homodimers. Mg(2+) is required as a cofactor. Post-translationally, the disulfide bond which can form in the large chain dimeric partners within the hexadecamer appears to be associated with oxidative stress and protein turnover.

The protein resides in the plastid. It localises to the chloroplast. The catalysed reaction is 2 (2R)-3-phosphoglycerate + 2 H(+) = D-ribulose 1,5-bisphosphate + CO2 + H2O. The enzyme catalyses D-ribulose 1,5-bisphosphate + O2 = 2-phosphoglycolate + (2R)-3-phosphoglycerate + 2 H(+). In terms of biological role, ruBisCO catalyzes two reactions: the carboxylation of D-ribulose 1,5-bisphosphate, the primary event in carbon dioxide fixation, as well as the oxidative fragmentation of the pentose substrate in the photorespiration process. Both reactions occur simultaneously and in competition at the same active site. This is Ribulose bisphosphate carboxylase large chain from Barbarea verna (Land cress).